Consider the following 201-residue polypeptide: Large ribosomal subunit protein uL4 (201 aa).

The disordered stretch occupies residues 43 to 71 (TRAQKTRSEVSGGGKKPWAQKGTGRARAG).

The protein belongs to the universal ribosomal protein uL4 family. As to quaternary structure, part of the 50S ribosomal subunit.

Functionally, one of the primary rRNA binding proteins, this protein initially binds near the 5'-end of the 23S rRNA. It is important during the early stages of 50S assembly. It makes multiple contacts with different domains of the 23S rRNA in the assembled 50S subunit and ribosome. Its function is as follows. Forms part of the polypeptide exit tunnel. The sequence is that of Large ribosomal subunit protein uL4 from Pseudoalteromonas translucida (strain TAC 125).